The chain runs to 926 residues: Serine/threonine-protein kinase SIK2 (926 aa).

In terms of domain architecture, Protein kinase spans 20–271; that stretch reads YDIEGTLGKG…IAQIKEHKWM (252 aa). Position 25 is a phosphothreonine (Thr-25). Residues 26-34 and Lys-49 contribute to the ATP site; that span reads LGKGNFAVV. Position 53 is an N6-acetyllysine; by EP300 (Lys-53). The Proton acceptor role is filled by Asp-142. Thr-175 is subject to Phosphothreonine; by LKB1. The UBA domain maps to 295–335; that stretch reads EFNEQVLRLMHSLGIDQQKTIESLQNKSYNHFAAIYFLLVE. Thr-484 carries the post-translational modification Phosphothreonine. Phosphoserine occurs at positions 534 and 587. 2 stretches are compositionally biased toward low complexity: residues 644–659 and 742–756; these read SSCP…ESVS and SSYP…LPRQ. Disordered stretches follow at residues 644 to 666, 742 to 776, and 801 to 896; these read SSCP…ASVH, SSYP…PLSP, and PLPS…SSYD. A compositionally biased stretch (polar residues) spans 765–774; sequence APPFSLTQPL. Residues 822–834 are compositionally biased toward pro residues; it reads QPPPPPPPPPPRQ.

It belongs to the protein kinase superfamily. CAMK Ser/Thr protein kinase family. SNF1 subfamily. In terms of assembly, interacts with and phosphorylates TORC2/CRTC2. It depends on Mg(2+) as a cofactor. In terms of processing, phosphorylated at Thr-175 by STK11/LKB1 in complex with STE20-related adapter-alpha (STRADA) pseudo kinase and CAB39. Phosphorylated at Thr-484 in response to insulin in adipocytes. Acetylation at Lys-53 inhibits kinase activity. Deacetylated by HDAC6.

It localises to the cytoplasm. It is found in the endoplasmic reticulum membrane. It carries out the reaction L-seryl-[protein] + ATP = O-phospho-L-seryl-[protein] + ADP + H(+). It catalyses the reaction L-threonyl-[protein] + ATP = O-phospho-L-threonyl-[protein] + ADP + H(+). Activated by phosphorylation on Thr-175. Its function is as follows. Serine/threonine-protein kinase that plays a role in many biological processes such as fatty acid oxidation, autophagy, immune response or glucose metabolism. Phosphorylates 'Ser-794' of IRS1 in insulin-stimulated adipocytes, potentially modulating the efficiency of insulin signal transduction. Inhibits CREB activity by phosphorylating and repressing TORCs, the CREB-specific coactivators. Phosphorylates EP300 and thus inhibits its histone acetyltransferase activity. In turn, regulates the DNA-binding ability of several transcription factors such as PPARA or MLXIPL. Also plays a role in thymic T-cell development. This Homo sapiens (Human) protein is Serine/threonine-protein kinase SIK2 (SIK2).